A 449-amino-acid chain; its full sequence is Aspartyl protease AED3 (449 aa).

The first 23 residues, 1 to 23 (MASSSLHFFFFLTLLLPFTFTTA), serve as a signal peptide directing secretion. Residues 104 to 444 (YVVRAKLGTP…DVPNSRIGIA (341 aa)) enclose the Peptidase A1 domain. Residue D122 is part of the active site. A disulfide bridge connects residues C132 and C138. 5 N-linked (GlcNAc...) asparagine glycosylation sites follow: N140, N148, N184, N211, and N297. D328 is an active-site residue. N353 carries N-linked (GlcNAc...) asparagine glycosylation. C366 and C405 are joined by a disulfide.

This sequence belongs to the peptidase A1 family.

It localises to the secreted. Its subcellular location is the extracellular space. The protein localises to the apoplast. This is Aspartyl protease AED3 from Arabidopsis thaliana (Mouse-ear cress).